We begin with the raw amino-acid sequence, 309 residues long: Ribosomal RNA small subunit methyltransferase H (309 aa).

S-adenosyl-L-methionine-binding positions include 34-36 (GGH), Asp-54, Phe-80, Asp-102, and Gln-109.

This sequence belongs to the methyltransferase superfamily. RsmH family.

The protein localises to the cytoplasm. It catalyses the reaction cytidine(1402) in 16S rRNA + S-adenosyl-L-methionine = N(4)-methylcytidine(1402) in 16S rRNA + S-adenosyl-L-homocysteine + H(+). Specifically methylates the N4 position of cytidine in position 1402 (C1402) of 16S rRNA. The protein is Ribosomal RNA small subunit methyltransferase H of Cellvibrio japonicus (strain Ueda107) (Pseudomonas fluorescens subsp. cellulosa).